The primary structure comprises 20 residues: Cathepsin L1 (20 aa).

Residues 1-10 (AVPDKIDPRE) show a composition bias toward basic and acidic residues. The disordered stretch occupies residues 1-20 (AVPDKIDPRESGYVTGVKDQ).

It belongs to the peptidase C1 family. As to quaternary structure, dimer of a heavy and a light chain linked by disulfide bonds.

It is found in the lysosome. The catalysed reaction is Specificity close to that of papain. As compared to cathepsin B, cathepsin L exhibits higher activity toward protein substrates, but has little activity on Z-Arg-Arg-NHMec, and no peptidyl-dipeptidase activity.. Its function is as follows. Thiol protease that assists the parasite in burrowing through the gut wall and liver of its mammalian host. This is Cathepsin L1 from Fasciola hepatica (Liver fluke).